The chain runs to 891 residues: Putative alpha,alpha-trehalose-phosphate synthase [UDP-forming] 100 kDa subunit (891 aa).

Threonine 88 carries the post-translational modification Phosphothreonine. Residues 88-126 are disordered; that stretch reads TGGSMTPGLGAMSPIPGSGRSSPLYTQPRSRATSPSRVR. Residues 106 to 124 show a composition bias toward polar residues; sequence GRSSPLYTQPRSRATSPSR. 2 positions are modified to phosphoserine: serine 108 and serine 109. The segment at 132 to 613 is glycosyltransferase; the sequence is AAPGIGAGAL…VTGFETKLKK (482 aa).

The protein in the N-terminal section; belongs to the glycosyltransferase 20 family.

It carries out the reaction D-glucose 6-phosphate + UDP-alpha-D-glucose = alpha,alpha-trehalose 6-phosphate + UDP + H(+). This Schizosaccharomyces pombe (strain 972 / ATCC 24843) (Fission yeast) protein is Putative alpha,alpha-trehalose-phosphate synthase [UDP-forming] 100 kDa subunit.